The following is a 1015-amino-acid chain: DNA polymerase catalytic subunit (1015 aa).

It belongs to the DNA polymerase type-B family. As to quaternary structure, forms a complex with the major DNA-binding protein BALF2, the DNA polymerase processivity factor BMRF1, and the alkaline exonuclease BGLF5. Interacts with the putative helicase-primase complex composed of BBLF4, BSLF1 and BBLF2/3 proteins; these interactions may coordinate leading and lagging strand DNA synthesis at the replication fork.

It is found in the host nucleus. It carries out the reaction DNA(n) + a 2'-deoxyribonucleoside 5'-triphosphate = DNA(n+1) + diphosphate. Replicates viral genomic DNA in the late phase of lytic infection, producing long concatemeric DNA. The replication complex is composed of six viral proteins: the DNA polymerase, processivity factor, primase, primase-associated factor, helicase, and ssDNA-binding protein. The chain is DNA polymerase catalytic subunit from Homo sapiens (Human).